We begin with the raw amino-acid sequence, 479 residues long: Cysteine--tRNA ligase (479 aa).

C29 contributes to the Zn(2+) binding site. The 'HIGH' region signature appears at 31 to 41 (ATVQGAPHIGH). Positions 171–197 (QRVEDMQDAPDADPRGKRDPRDFALWK) are disordered. Over residues 182–197 (ADPRGKRDPRDFALWK) the composition is skewed to basic and acidic residues. 3 residues coordinate Zn(2+): C224, H249, and E253. Positions 280 to 284 (KMSKS) match the 'KMSKS' region motif. K283 serves as a coordination point for ATP.

The protein belongs to the class-I aminoacyl-tRNA synthetase family. Monomer. Zn(2+) is required as a cofactor.

It localises to the cytoplasm. It catalyses the reaction tRNA(Cys) + L-cysteine + ATP = L-cysteinyl-tRNA(Cys) + AMP + diphosphate. This Kocuria rhizophila (strain ATCC 9341 / DSM 348 / NBRC 103217 / DC2201) protein is Cysteine--tRNA ligase.